The sequence spans 164 residues: CASP-like protein 1C2 (164 aa).

At 1-8 (MVKLTQRL) the chain is on the cytoplasmic side. A helical membrane pass occupies residues 9–29 (GGLVLRFAAFCAALGAVIAMI). Topologically, residues 30–51 (TSRERSSFFVISLVAKYSDLAA) are extracellular. Residues 52–72 (FKYFVIANAIVTVYSFLVLFL) form a helical membrane-spanning segment. At 73–80 (PKESLLWK) the chain is on the cytoplasmic side. A helical membrane pass occupies residues 81–101 (FVVVLDLMVTMLLTSSLSAAV). At 102–129 (AVAQVGKRGNANAGWLPICGQVPRFCDQ) the chain is on the extracellular side. Residues 130–150 (ITGALIAGLVALVLYVFLLIF) form a helical membrane-spanning segment. Residues 151–164 (SIHHVVDPFLLRKS) lie on the Cytoplasmic side of the membrane.

It belongs to the Casparian strip membrane proteins (CASP) family. Homodimer and heterodimers.

Its subcellular location is the cell membrane. The protein is CASP-like protein 1C2 of Arabidopsis thaliana (Mouse-ear cress).